The sequence spans 236 residues: Uridylate kinase (236 aa).

K8–G11 contacts ATP. Residues G16 to G21 are involved in allosteric activation by GTP. ATP-binding residues include G51 and R55. Residues D70 and T131–T138 contribute to the UMP site. N159, Y165, and D168 together coordinate ATP.

Belongs to the UMP kinase family. Homohexamer.

It is found in the cytoplasm. The enzyme catalyses UMP + ATP = UDP + ADP. The protein operates within pyrimidine metabolism; CTP biosynthesis via de novo pathway; UDP from UMP (UMPK route): step 1/1. Allosterically activated by GTP. Inhibited by UTP. Its function is as follows. Catalyzes the reversible phosphorylation of UMP to UDP. This is Uridylate kinase from Shouchella clausii (strain KSM-K16) (Alkalihalobacillus clausii).